Consider the following 355-residue polypeptide: uncharacterized protein (355 aa).

It belongs to the serpin family. Poxviruses subfamily.

This is an uncharacterized protein from Vertebrata (FPV).